We begin with the raw amino-acid sequence, 261 residues long: Taurine import ATP-binding protein TauB (261 aa).

The 230-residue stretch at 4–233 folds into the ABC transporter domain; sequence LTADRVSVRY…RWRAGDSARA (230 aa). 38–45 contributes to the ATP binding site; it reads GPSGCGKT.

The protein belongs to the ABC transporter superfamily. Taurine importer (TC 3.A.1.17.1) family. As to quaternary structure, the complex is composed of two ATP-binding proteins (TauB), two transmembrane proteins (TauC) and a solute-binding protein (TauA).

Its subcellular location is the cell inner membrane. The catalysed reaction is taurine(out) + ATP + H2O = taurine(in) + ADP + phosphate + H(+). In terms of biological role, part of the ABC transporter complex TauABC involved in taurine import. Responsible for energy coupling to the transport system. The protein is Taurine import ATP-binding protein TauB of Chromobacterium violaceum (strain ATCC 12472 / DSM 30191 / JCM 1249 / CCUG 213 / NBRC 12614 / NCIMB 9131 / NCTC 9757 / MK).